The primary structure comprises 875 residues: Leucine--tRNA ligase (875 aa).

The short motif at 43 to 53 (PYPSGRIHIGH) is the 'HIGH' region element. The 'KMSKS' region signature appears at 631–635 (KMSKS). Lys-634 serves as a coordination point for ATP.

This sequence belongs to the class-I aminoacyl-tRNA synthetase family.

It localises to the cytoplasm. It carries out the reaction tRNA(Leu) + L-leucine + ATP = L-leucyl-tRNA(Leu) + AMP + diphosphate. The protein is Leucine--tRNA ligase of Mesorhizobium japonicum (strain LMG 29417 / CECT 9101 / MAFF 303099) (Mesorhizobium loti (strain MAFF 303099)).